Consider the following 185-residue polypeptide: Ribosome-recycling factor (185 aa).

Positions 138–159 are disordered; that stretch reads KVKKLEKDKEISEDESKKAQEQ.

This sequence belongs to the RRF family.

It localises to the cytoplasm. Functionally, responsible for the release of ribosomes from messenger RNA at the termination of protein biosynthesis. May increase the efficiency of translation by recycling ribosomes from one round of translation to another. This Helicobacter acinonychis (strain Sheeba) protein is Ribosome-recycling factor.